The chain runs to 80 residues: uncharacterized protein (80 aa).

This is an uncharacterized protein from Shigella flexneri.